Reading from the N-terminus, the 363-residue chain is Sensor protein BasS (363 aa).

Residues 1-13 (MHFLRRPISLRQR) are Cytoplasmic-facing. The chain crosses the membrane as a helical span at residues 14-34 (LILTIGAILLVFELISVFWLW). Over 35 to 64 (HESTEQIQLFEQALRDNRNNDRHIMREIRE) the chain is Periplasmic. The chain crosses the membrane as a helical span at residues 65–88 (AVASLIVPGVFMVSLTLFICYQAV). Residues 89–141 (RRITRPLAELQKELEARTADNLTPIAIHSATLEIEAVVSALNDLVSRLTSTLD) enclose the HAMP domain. The Cytoplasmic portion of the chain corresponds to 89–363 (RRITRPLAEL…KKDQYVANQI (275 aa)). The region spanning 149 to 357 (DVAHELRTPL…RAWVRLKKDQ (209 aa)) is the Histidine kinase domain. Phosphohistidine; by autocatalysis is present on H152.

Autophosphorylated.

It localises to the cell inner membrane. The catalysed reaction is ATP + protein L-histidine = ADP + protein N-phospho-L-histidine.. Functionally, member of the two-component regulatory system BasS/BasR Autophosphorylates and activates BasR by phosphorylation. This chain is Sensor protein BasS (basS), found in Escherichia coli (strain K12).